The primary structure comprises 145 residues: D-aminoacyl-tRNA deacylase (145 aa).

Residues 137–138 (GP) carry the Gly-cisPro motif, important for rejection of L-amino acids motif.

The protein belongs to the DTD family. In terms of assembly, homodimer.

Its subcellular location is the cytoplasm. It carries out the reaction glycyl-tRNA(Ala) + H2O = tRNA(Ala) + glycine + H(+). The enzyme catalyses a D-aminoacyl-tRNA + H2O = a tRNA + a D-alpha-amino acid + H(+). Its function is as follows. An aminoacyl-tRNA editing enzyme that deacylates mischarged D-aminoacyl-tRNAs. Also deacylates mischarged glycyl-tRNA(Ala), protecting cells against glycine mischarging by AlaRS. Acts via tRNA-based rather than protein-based catalysis; rejects L-amino acids rather than detecting D-amino acids in the active site. By recycling D-aminoacyl-tRNA to D-amino acids and free tRNA molecules, this enzyme counteracts the toxicity associated with the formation of D-aminoacyl-tRNA entities in vivo and helps enforce protein L-homochirality. The chain is D-aminoacyl-tRNA deacylase from Shewanella piezotolerans (strain WP3 / JCM 13877).